The primary structure comprises 161 residues: TM2 domain-containing protein DDB_G0278163 (161 aa).

Residues 1 to 24 are Cytoplasmic-facing; sequence MGHHHHHHGGSGHHHHHHHHGSGH. A helical transmembrane segment spans residues 25-45; it reads YGGGAVLVTPIVTPVPVVYGS. Over 46 to 54 the chain is Extracellular; the sequence is RSSSYCPKS. Residues 52 to 100 form the TM2 domain; that stretch reads PKSMTVAYVLWFFFGILGFHRLYLGRVGTFFLYFFTAGVFGLGWLFDAF. The helical transmembrane segment at 55–75 threads the bilayer; that stretch reads MTVAYVLWFFFGILGFHRLYL. The Cytoplasmic portion of the chain corresponds to 76–80; it reads GRVGT. Residues 81 to 101 form a helical membrane-spanning segment; it reads FFLYFFTAGVFGLGWLFDAFY. The Extracellular segment spans residues 102 to 161; the sequence is THKMVKHYNECEFTKSCVGQSPPATIPIYQSEGAYPTYQQVPQQPPQFYQPQQQQPQYQP. Residues 139–161 are disordered; the sequence is YQQVPQQPPQFYQPQQQQPQYQP.

This sequence belongs to the TM2 family.

Its subcellular location is the membrane. This is TM2 domain-containing protein DDB_G0278163 from Dictyostelium discoideum (Social amoeba).